Reading from the N-terminus, the 240-residue chain is Ribonuclease T2 (240 aa).

A signal peptide spans 1–19; it reads MRFIAFAVIFSAVYLCSSA. C41 and C46 are disulfide-bonded. The active site involves H56. 3 disulfides stabilise this stretch: C66–C110, C173–C227, and C191–C201. Residues N67 and N73 are each glycosylated (N-linked (GlcNAc...) asparagine). Residues E103 and H107 contribute to the active site.

This sequence belongs to the RNase T2 family. As to expression, ubiquitous.

The protein localises to the lysosome lumen. Its subcellular location is the endoplasmic reticulum lumen. The protein resides in the secreted. The catalysed reaction is a ribonucleotidyl-ribonucleotide-RNA + H2O = a 3'-end 3'-phospho-ribonucleotide-RNA + a 5'-end dephospho-ribonucleoside-RNA + H(+). Has ribonuclease activity, with higher activity at acidic pH. Probably is involved in lysosomal degradation of ribosomal RNA. The protein is Ribonuclease T2 (rnaset2) of Danio rerio (Zebrafish).